The primary structure comprises 212 residues: Ribosomal RNA large subunit methyltransferase E (212 aa).

A disordered region spans residues 1 to 26; that stretch reads MPAERPSVSQKPKNPYKRPDAFTKAA. S-adenosyl-L-methionine contacts are provided by Gly63, Trp65, Asp83, Asp101, and Asp122. Catalysis depends on Lys162, which acts as the Proton acceptor.

It belongs to the class I-like SAM-binding methyltransferase superfamily. RNA methyltransferase RlmE family.

The protein resides in the cytoplasm. The enzyme catalyses uridine(2552) in 23S rRNA + S-adenosyl-L-methionine = 2'-O-methyluridine(2552) in 23S rRNA + S-adenosyl-L-homocysteine + H(+). Specifically methylates the uridine in position 2552 of 23S rRNA at the 2'-O position of the ribose in the fully assembled 50S ribosomal subunit. The chain is Ribosomal RNA large subunit methyltransferase E from Sorangium cellulosum (strain So ce56) (Polyangium cellulosum (strain So ce56)).